Here is a 426-residue protein sequence, read N- to C-terminus: Glutamyl-tRNA reductase (426 aa).

Residues threonine 49 to arginine 52, serine 101, glutamate 106 to glutamine 108, and glutamine 112 each bind substrate. Residue cysteine 50 is the Nucleophile of the active site. Residue glycine 181–isoleucine 186 participates in NADP(+) binding. The tract at residues aspartate 404 to arginine 426 is disordered.

It belongs to the glutamyl-tRNA reductase family. Homodimer.

It carries out the reaction (S)-4-amino-5-oxopentanoate + tRNA(Glu) + NADP(+) = L-glutamyl-tRNA(Glu) + NADPH + H(+). It participates in porphyrin-containing compound metabolism; protoporphyrin-IX biosynthesis; 5-aminolevulinate from L-glutamyl-tRNA(Glu): step 1/2. In terms of biological role, catalyzes the NADPH-dependent reduction of glutamyl-tRNA(Glu) to glutamate 1-semialdehyde (GSA). The protein is Glutamyl-tRNA reductase of Xanthomonas campestris pv. phaseoli.